The chain runs to 303 residues: Serine/threonine-protein phosphatase 6 catalytic subunit (303 aa).

D51, H53, D79, and N111 together coordinate Mn(2+). H112 (proton donor) is an active-site residue. H161 and H235 together coordinate Mn(2+).

The protein belongs to the PPP phosphatase family. PP-6 (PP-V) subfamily. The cofactor is Mn(2+).

Its subcellular location is the cytoplasm. The catalysed reaction is O-phospho-L-seryl-[protein] + H2O = L-seryl-[protein] + phosphate. It carries out the reaction O-phospho-L-threonyl-[protein] + H2O = L-threonyl-[protein] + phosphate. Functionally, may be involved in controlling cellularization or in regulating transcription of the genes involved in this process. The chain is Serine/threonine-protein phosphatase 6 catalytic subunit (PpV) from Drosophila melanogaster (Fruit fly).